A 192-amino-acid chain; its full sequence is Large ribosomal subunit protein uL18 (192 aa).

The protein belongs to the universal ribosomal protein uL18 family. As to quaternary structure, part of the 50S ribosomal subunit. Contacts the 5S and 23S rRNAs.

Functionally, this is one of the proteins that bind and probably mediate the attachment of the 5S RNA into the large ribosomal subunit, where it forms part of the central protuberance. In Methanothermobacter thermautotrophicus (strain ATCC 29096 / DSM 1053 / JCM 10044 / NBRC 100330 / Delta H) (Methanobacterium thermoautotrophicum), this protein is Large ribosomal subunit protein uL18.